A 520-amino-acid polypeptide reads, in one-letter code: Cytochrome P450 monooxygenase vrtE (520 aa).

The chain crosses the membrane as a helical span at residues 16-36 (ALSLLHYVLGAIFLLLLFHML). A glycan (N-linked (GlcNAc...) asparagine) is linked at Asn137. Cys459 is a binding site for heme.

It belongs to the cytochrome P450 family. Requires heme as cofactor.

The protein resides in the membrane. It functions in the pathway secondary metabolite biosynthesis; terpenoid biosynthesis. Its function is as follows. Cytochrome P450 monooxygenase; part of the gene cluster that mediates the biosynthesis of viridicatumtoxin, a tetracycline-like fungal meroterpenoid with a unique, fused spirobicyclic ring system. The first step of the pathway is the production of the malonamoyl-CoA starter unit for the polyketide synthase vrtA. The aldolase vrtJ may be involved in the synthesis of the malonamate substrate for malonamoyl-CoA synthetase vrtB. The polyketide synthase vrtA then may utilize the malonamoyl-CoA starter unit, followed by sequential condensation of eight malonyl-CoA units to form the polyketide backbone. The cyclization of the last ring could be mediated by the lactamase-like protein vrtG. The proposed post-PKS tailoring steps are a hydroxylation at C5 catalyzed the cytochrome P450 monooxygenase vrtE, a hydroxylation at C12a catalyzed by VrtH and/or VrtI, and an O-methylation by the O-methyltransferase vrtF. VrtC is then proposed to catalyze the transfer of a geranyl group synthesized by vrtD to the aromatic C ring of the tetracyclic polyketide intermediate of viridicatumtoxin to yield previridicatumtoxin. Finally, the cytochrome P450 monooxygenase vrtK catalyzes the spirocyclization of the geranyl moiety of previridicatumtoxin to afford viridicatumtoxin. This chain is Cytochrome P450 monooxygenase vrtE, found in Penicillium aethiopicum.